The following is a 109-amino-acid chain: SRA stem-loop-interacting RNA-binding protein, mitochondrial (109 aa).

Ser15 carries the phosphoserine modification. The RRM domain maps to 19–103 (PVAFVRRIPW…RRPKLPQTSD (85 aa)). Residue Thr101 is modified to Phosphothreonine. Phosphoserine is present on Ser102.

Its subcellular location is the mitochondrion. The protein localises to the nucleus. In terms of biological role, RNA-binding protein that acts as a nuclear receptor corepressor. Probably acts by binding the SRA RNA, and repressing the SRA-mediated nuclear receptor coactivation. Binds the STR7 loop of SRA RNA. Also able to repress glucocorticoid (GR), androgen (AR), thyroid (TR) and VDR-mediated transactivation. The sequence is that of SRA stem-loop-interacting RNA-binding protein, mitochondrial (SLIRP) from Pongo abelii (Sumatran orangutan).